Reading from the N-terminus, the 511-residue chain is Bifunctional purine biosynthesis protein PurH (511 aa).

An MGS-like domain is found at 1 to 145 (MKRRAIISVS…KNHAYVTAVV (145 aa)).

It belongs to the PurH family.

The enzyme catalyses (6R)-10-formyltetrahydrofolate + 5-amino-1-(5-phospho-beta-D-ribosyl)imidazole-4-carboxamide = 5-formamido-1-(5-phospho-D-ribosyl)imidazole-4-carboxamide + (6S)-5,6,7,8-tetrahydrofolate. It carries out the reaction IMP + H2O = 5-formamido-1-(5-phospho-D-ribosyl)imidazole-4-carboxamide. It functions in the pathway purine metabolism; IMP biosynthesis via de novo pathway; 5-formamido-1-(5-phospho-D-ribosyl)imidazole-4-carboxamide from 5-amino-1-(5-phospho-D-ribosyl)imidazole-4-carboxamide (10-formyl THF route): step 1/1. The protein operates within purine metabolism; IMP biosynthesis via de novo pathway; IMP from 5-formamido-1-(5-phospho-D-ribosyl)imidazole-4-carboxamide: step 1/1. This is Bifunctional purine biosynthesis protein PurH from Anoxybacillus flavithermus (strain DSM 21510 / WK1).